We begin with the raw amino-acid sequence, 37 residues long: Large ribosomal subunit protein bL36 (37 aa).

This sequence belongs to the bacterial ribosomal protein bL36 family.

The protein is Large ribosomal subunit protein bL36 of Rhodococcus erythropolis (strain PR4 / NBRC 100887).